Here is a 250-residue protein sequence, read N- to C-terminus: Small ribosomal subunit protein uS2 (250 aa).

Residues 226–250 (DQQNRQELGEDLGAAVEPAAEEALA) are disordered. Low complexity predominate over residues 239–250 (AAVEPAAEEALA).

This sequence belongs to the universal ribosomal protein uS2 family.

In Zymomonas mobilis subsp. mobilis (strain ATCC 31821 / ZM4 / CP4), this protein is Small ribosomal subunit protein uS2 (rpsB).